Reading from the N-terminus, the 258-residue chain is Transcriptional repressor AccR (258 aa).

One can recognise an HTH deoR-type domain in the interval Thr6–Ser61. Positions Leu23 to Asp42 form a DNA-binding region, H-T-H motif.

Its function is as follows. Represses opine catabolism and conjugal transfer of the nopaline Ti plasmid pTiC58. The chain is Transcriptional repressor AccR (accR) from Agrobacterium fabrum (strain C58 / ATCC 33970) (Agrobacterium tumefaciens (strain C58)).